The sequence spans 593 residues: ESX-1 secretion system protein EccCb1 (593 aa).

2 FtsK domains span residues 66–260 (RQEV…NETQ) and 350–546 (QVPL…EKND). Residues 85–92 (GAPQTGKS) and 377–384 (GAPKSGKT) each bind ATP.

In terms of assembly, part of the ESX-1 / type VII secretion system (T7SS), which is composed of cytosolic and membrane components. The ESX-1 membrane complex is composed of EccB1, EccCa1, EccCb1, EccD1 and EccE1.

It is found in the cytoplasm. Functionally, part of the ESX-1 / type VII specialized secretion system (T7SS), which exports several proteins including EsxA and EsxB. Plays a role in DNA conjugation, in both donor and recipient strains. In Mycolicibacterium smegmatis (strain ATCC 700084 / mc(2)155) (Mycobacterium smegmatis), this protein is ESX-1 secretion system protein EccCb1.